We begin with the raw amino-acid sequence, 535 residues long: GPI mannosyltransferase 4 (535 aa).

The Cytoplasmic segment spans residues 1 to 10; sequence MSLSLDFNWR. The helical transmembrane segment at 11–31 threads the bilayer; that stretch reads YVYLIAIGLKFVLALSNSYIH. Topologically, residues 32–91 are lumenal; it reads PDEHFQSFEVLTNKIFSFTTTTPWEFSSDTPARSFGPLYLFYAPLLYSIKLVGYELSPLQ. Residues 92 to 112 form a helical membrane-spanning segment; sequence IWYMARLQNVLIGWVITDMCI. Topologically, residues 113–141 are cytoplasmic; that stretch reads YRLLPTKPERIKGLFYTSTSYITLVYQSH. The chain crosses the membrane as a helical span at residues 142–162; it reads CFSNSIETWLVLICVLVINDL. Topologically, residues 163 to 181 are lumenal; it reads RFIQESNVPELQSQRQYQK. The helical transmembrane segment at 182–202 threads the bilayer; the sequence is LFWFGALVSIGIFNRITFPAF. Residues 203 to 220 are Cytoplasmic-facing; sequence LALPSLYLMKYFRHNKMS. Residues 221-241 traverse the membrane as a helical segment; it reads AIFSLLGFMLPTIAIILLDTF. Residues 242 to 284 lie on the Lumenal side of the membrane; it reads EFNGSIDDILKHPLDFNSYVITPLNNLIYNSKVENLSNHGLHP. N-linked (GlcNAc...) asparagine glycans are attached at residues asparagine 244 and asparagine 276. Residues 285–305 traverse the membrane as a helical segment; that stretch reads YYTHLLVNLPQILGPGLFFMV. Residues 306–311 are Cytoplasmic-facing; sequence SNFKNQ. The helical transmembrane segment at 312–332 threads the bilayer; it reads YWKTTPFLAVISGVSVLSLIP. The Lumenal portion of the chain corresponds to 333-337; sequence HQELR. A helical transmembrane segment spans residues 338-358; that stretch reads FLIPIVPLVCCCFDLKNISSA. Topologically, residues 359 to 370 are cytoplasmic; it reads SKGERITKAPPM. A helical membrane pass occupies residues 371–391; the sequence is VSVLMNLWYLFNILLAVLMGV. Residues 392–535 lie on the Lumenal side of the membrane; that stretch reads YHQGGIVPAL…KPGLGIYELL (144 aa). Residue asparagine 507 is glycosylated (N-linked (GlcNAc...) asparagine).

This sequence belongs to the glycosyltransferase 22 family. PIGZ subfamily.

It localises to the endoplasmic reticulum membrane. The protein operates within glycolipid biosynthesis; glycosylphosphatidylinositol-anchor biosynthesis. In terms of biological role, alpha-1,2-mannosyltransferase involved in glycosylphosphatidylinositol-anchor biosynthesis. Transfers a fourth mannose to trimannosyl-GPIs during GPI precursor assembly. The presence of a fourth mannose in GPI is essential in fungi. This is GPI mannosyltransferase 4 (SMP3) from Debaryomyces hansenii (strain ATCC 36239 / CBS 767 / BCRC 21394 / JCM 1990 / NBRC 0083 / IGC 2968) (Yeast).